The primary structure comprises 213 residues: NADH dehydrogenase [ubiquinone] iron-sulfur protein 7, mitochondrial (213 aa).

The N-terminal 38 residues, 1 to 38 (MAALSAPGLCGFRILGLRSSVGTAVQARGVHQSVATDG), are a transit peptide targeting the mitochondrion. The disordered stretch occupies residues 32-53 (QSVATDGPSSTQPALPKARAVA). Positions 33–44 (SVATDGPSSTQP) are enriched in polar residues. The [4Fe-4S] cluster site is built by C88 and C89. R111 carries the hydroxyarginine modification. Residues C153 and C183 each coordinate [4Fe-4S] cluster.

Belongs to the complex I 20 kDa subunit family. As to quaternary structure, core subunit of respiratory chain NADH dehydrogenase (Complex I) which is composed of 45 different subunits. This is a component of the iron-sulfur (IP) fragment of the enzyme. It depends on [4Fe-4S] cluster as a cofactor. Hydroxylated ar Arg-111 by NDUFAF5 early in the pathway of assembly of complex I, before the formation of the juncture between peripheral and membrane arms.

It is found in the mitochondrion inner membrane. The catalysed reaction is a ubiquinone + NADH + 5 H(+)(in) = a ubiquinol + NAD(+) + 4 H(+)(out). Functionally, core subunit of the mitochondrial membrane respiratory chain NADH dehydrogenase (Complex I) which catalyzes electron transfer from NADH through the respiratory chain, using ubiquinone as an electron acceptor. Essential for the catalytic activity of complex I. The sequence is that of NADH dehydrogenase [ubiquinone] iron-sulfur protein 7, mitochondrial (NDUFS7) from Gorilla gorilla gorilla (Western lowland gorilla).